A 428-amino-acid chain; its full sequence is MLYKRSSQLFLEAEKVIPGGVNSPVRAFKSVGGTPIFAKSAKGAYVYDEDGNRFVDYINSWGPMILGHAYEPVVTAVIEKAKSGTSFGMPTELETEIAKLAVSMVSNIDKIRFVNSGTEACMSAIRLARGFTKRDKIIKFAGCYHGHSDSFLIQAGSGAITFGSPNSPGVTSGTAKDTLLASYNDIQNVKNLFDANKNEIAAVIIEPVAGNMGCIPPQKGFLEALQQLCHENNALLIFDEVMTGFRLAKGGAQELFNVQADIVCFGKVIGGGLPVGAFAARNEIMNYLAPLGPVYQAGTLSGNPLAMAAGLAMLKALNENQEVFARLEEKTAYLAKGIADVLTSNNVVHTINRVGSMVSVHFDANPVFDFETAKNGDNDTFKKFFHGLLAEGVYIAPSAYETWFISDALTYEDLDFTIRAVDKVSKNL.

Lys-267 carries the post-translational modification N6-(pyridoxal phosphate)lysine.

This sequence belongs to the class-III pyridoxal-phosphate-dependent aminotransferase family. HemL subfamily. Homodimer. Pyridoxal 5'-phosphate is required as a cofactor.

It is found in the cytoplasm. The enzyme catalyses (S)-4-amino-5-oxopentanoate = 5-aminolevulinate. Its pathway is porphyrin-containing compound metabolism; protoporphyrin-IX biosynthesis; 5-aminolevulinate from L-glutamyl-tRNA(Glu): step 2/2. In Flavobacterium psychrophilum (strain ATCC 49511 / DSM 21280 / CIP 103535 / JIP02/86), this protein is Glutamate-1-semialdehyde 2,1-aminomutase.